The primary structure comprises 863 residues: Scm-like with four MBT domains protein 1 (863 aa).

MBT repeat units lie at residues 20–120 (FSWE…LEAP), 128–232 (SDWN…LQPP), 242–346 (ADWQ…INPP), and 354–451 (FDWA…LSTP). Residues 638-773 (KKKNKRIGRP…SDDENKPPSP (136 aa)) are disordered. Residues 660-679 (KSSKRRKRRKNIFVHKKKRS) show a composition bias toward basic residues. Polar residues predominate over residues 680 to 691 (SASVDNTPVGSP). Composition is skewed to acidic residues over residues 696-710 (GEDE…EDSL) and 718-727 (QQEELQEESE). The segment covering 734-744 (SSSSPTQSETP) has biased composition (low complexity). Phosphoserine occurs at positions 764 and 772. The region spanning 793 to 861 (WSVADVVRFI…RIKFAFYEQF (69 aa)) is the SAM domain.

As to quaternary structure, interacts with MYOD1. Component of the SLC (SFMBT1-LSD1-CoREST) corepressor complex, which also contains KDM1A/LSD1 and RCOR1/CoREST. Interacts with KDM1A/LSD1 and RCOR1/CoREST. Interacts with MYOD1. Interacts with L3MBTL3. As to expression, highly expressed in the testis, low expression is detected in brain, kidney, heart and lung. Highly expressed in germ cells, where it associates with the synaptic regions of meiotic chromosomes in pachytene stage spermatocytes.

The protein resides in the nucleus. Its function is as follows. Histone-binding protein, which is part of various corepressor complexes. Mediates the recruitment of corepressor complexes to target genes, followed by chromatin compaction and repression of transcription. Plays a role during myogenesis: required for the maintenance of undifferentiated states of myogenic progenitor cells via interaction with MYOD1. Interaction with MYOD1 leads to the recruitment of associated corepressors and silencing of MYOD1 target genes. Part of the SLC complex in germ cells, where it may play a role during spermatogenesis. This is Scm-like with four MBT domains protein 1 (Sfmbt1) from Mus musculus (Mouse).